Reading from the N-terminus, the 257-residue chain is 4-hydroxy-tetrahydrodipicolinate reductase (257 aa).

NAD(+) contacts are provided by residues 7–12, Asp-32, 91–93, and 115–118; these read GAAGRM, GTT, and SPNF. The Proton donor/acceptor role is filled by His-147. (S)-2,3,4,5-tetrahydrodipicolinate is bound at residue His-148. Lys-151 functions as the Proton donor in the catalytic mechanism. 157-158 contacts (S)-2,3,4,5-tetrahydrodipicolinate; sequence GT.

The protein belongs to the DapB family.

It is found in the cytoplasm. The catalysed reaction is (S)-2,3,4,5-tetrahydrodipicolinate + NAD(+) + H2O = (2S,4S)-4-hydroxy-2,3,4,5-tetrahydrodipicolinate + NADH + H(+). It catalyses the reaction (S)-2,3,4,5-tetrahydrodipicolinate + NADP(+) + H2O = (2S,4S)-4-hydroxy-2,3,4,5-tetrahydrodipicolinate + NADPH + H(+). It functions in the pathway amino-acid biosynthesis; L-lysine biosynthesis via DAP pathway; (S)-tetrahydrodipicolinate from L-aspartate: step 4/4. In terms of biological role, catalyzes the conversion of 4-hydroxy-tetrahydrodipicolinate (HTPA) to tetrahydrodipicolinate. This is 4-hydroxy-tetrahydrodipicolinate reductase from Archaeoglobus fulgidus (strain ATCC 49558 / DSM 4304 / JCM 9628 / NBRC 100126 / VC-16).